A 239-amino-acid chain; its full sequence is tRNA (guanine-N(7)-)-methyltransferase (239 aa).

Residues Glu-69, Glu-94, Asp-121, and Asp-144 each contribute to the S-adenosyl-L-methionine site. Asp-144 is an active-site residue. Substrate is bound by residues Lys-148, Asp-180, and 217 to 220 (TKFE).

Belongs to the class I-like SAM-binding methyltransferase superfamily. TrmB family.

It carries out the reaction guanosine(46) in tRNA + S-adenosyl-L-methionine = N(7)-methylguanosine(46) in tRNA + S-adenosyl-L-homocysteine. The protein operates within tRNA modification; N(7)-methylguanine-tRNA biosynthesis. Catalyzes the formation of N(7)-methylguanine at position 46 (m7G46) in tRNA. This Pseudoalteromonas atlantica (strain T6c / ATCC BAA-1087) protein is tRNA (guanine-N(7)-)-methyltransferase.